Reading from the N-terminus, the 475-residue chain is Aspartyl/glutamyl-tRNA(Asn/Gln) amidotransferase subunit B (475 aa).

Belongs to the GatB/GatE family. GatB subfamily. Heterotrimer of A, B and C subunits.

The catalysed reaction is L-glutamyl-tRNA(Gln) + L-glutamine + ATP + H2O = L-glutaminyl-tRNA(Gln) + L-glutamate + ADP + phosphate + H(+). It carries out the reaction L-aspartyl-tRNA(Asn) + L-glutamine + ATP + H2O = L-asparaginyl-tRNA(Asn) + L-glutamate + ADP + phosphate + 2 H(+). Functionally, allows the formation of correctly charged Asn-tRNA(Asn) or Gln-tRNA(Gln) through the transamidation of misacylated Asp-tRNA(Asn) or Glu-tRNA(Gln) in organisms which lack either or both of asparaginyl-tRNA or glutaminyl-tRNA synthetases. The reaction takes place in the presence of glutamine and ATP through an activated phospho-Asp-tRNA(Asn) or phospho-Glu-tRNA(Gln). The polypeptide is Aspartyl/glutamyl-tRNA(Asn/Gln) amidotransferase subunit B (Chlorobium luteolum (strain DSM 273 / BCRC 81028 / 2530) (Pelodictyon luteolum)).